Consider the following 84-residue polypeptide: Small ribosomal subunit protein uS17 (84 aa).

It belongs to the universal ribosomal protein uS17 family. Part of the 30S ribosomal subunit.

Its function is as follows. One of the primary rRNA binding proteins, it binds specifically to the 5'-end of 16S ribosomal RNA. The sequence is that of Small ribosomal subunit protein uS17 from Borreliella afzelii (strain PKo) (Borrelia afzelii).